Consider the following 562-residue polypeptide: Isochorismate synthase 2, chloroplastic (562 aa).

Residues 1-55 (MASLQCSFHFLGTNPKKYNPSSIFQSYSRTSFTKLSSRVSRQRFLRCTLSMNGCE) constitute a chloroplast transit peptide.

This sequence belongs to the isochorismate synthase family. Mg(2+) serves as cofactor.

It localises to the plastid. The protein localises to the chloroplast. The catalysed reaction is chorismate = isochorismate. It participates in siderophore biosynthesis; salicylate biosynthesis. In terms of biological role, isochorismate synthase involved in the synthesis of salicylic acid (SA) required for both local and systemic acquired resistance (LAR and SAR) while SA synthesized through the phenylalanine ammonium lyase (PAL) pathway seems to potentiate plant cell death. Also involved in phylloquinone (vitamin K1) synthesis. Has no isochorismate pyruvate lyase (IPL) activity. This Arabidopsis thaliana (Mouse-ear cress) protein is Isochorismate synthase 2, chloroplastic (ICS2).